Consider the following 92-residue polypeptide: uncharacterized protein (92 aa).

This is an uncharacterized protein from Bacillus subtilis (strain 168).